The chain runs to 236 residues: 1-(5-phosphoribosyl)-5-[(5-phosphoribosylamino)methylideneamino] imidazole-4-carboxamide isomerase (236 aa).

Asp-8 serves as the catalytic Proton acceptor. The Proton donor role is filled by Asp-127.

It belongs to the HisA/HisF family.

It is found in the cytoplasm. It catalyses the reaction 1-(5-phospho-beta-D-ribosyl)-5-[(5-phospho-beta-D-ribosylamino)methylideneamino]imidazole-4-carboxamide = 5-[(5-phospho-1-deoxy-D-ribulos-1-ylimino)methylamino]-1-(5-phospho-beta-D-ribosyl)imidazole-4-carboxamide. It functions in the pathway amino-acid biosynthesis; L-histidine biosynthesis; L-histidine from 5-phospho-alpha-D-ribose 1-diphosphate: step 4/9. This is 1-(5-phosphoribosyl)-5-[(5-phosphoribosylamino)methylideneamino] imidazole-4-carboxamide isomerase from Campylobacter concisus (strain 13826).